Reading from the N-terminus, the 280-residue chain is 2-dehydro-3-deoxyphosphooctonate aldolase (280 aa).

This sequence belongs to the KdsA family.

It localises to the cytoplasm. It catalyses the reaction D-arabinose 5-phosphate + phosphoenolpyruvate + H2O = 3-deoxy-alpha-D-manno-2-octulosonate-8-phosphate + phosphate. The protein operates within carbohydrate biosynthesis; 3-deoxy-D-manno-octulosonate biosynthesis; 3-deoxy-D-manno-octulosonate from D-ribulose 5-phosphate: step 2/3. Its pathway is bacterial outer membrane biogenesis; lipopolysaccharide biosynthesis. This Thiobacillus denitrificans (strain ATCC 25259 / T1) protein is 2-dehydro-3-deoxyphosphooctonate aldolase.